We begin with the raw amino-acid sequence, 242 residues long: Aquaporin (242 aa).

Residues 1–11 (MNTSTKLICQK) lie on the Cytoplasmic side of the membrane. A helical transmembrane segment spans residues 12 to 32 (LFAEMLCSCIFGFAVYSAILN). Residues 33–39 (TKASNSS) lie on the Extracellular side of the membrane. Residues 40-60 (ISSTTVGLTVCFSSISLIYTF) form a helical membrane-spanning segment. The Cytoplasmic portion of the chain corresponds to 61-83 (CDHSVAHFNPAITIAAICTGKLD). The NPA motif lies at 69 to 71 (NPA). A helical membrane pass occupies residues 84-104 (ILLGIGYVIAQLIGFILATLL). Over 105 to 133 (TVVCFPYGYLKTMEFIASARISDDISTVN) the chain is Extracellular. Residues 134 to 154 (LFFTEFILSFILVFIAFEVGI) traverse the membrane as a helical segment. Residues 155–175 (NAIREPGVTLFVGIKQIDRSK) lie on the Cytoplasmic side of the membrane. A helical transmembrane segment spans residues 176-196 (FAPLTIGITLGFLAFLASTTS). Topologically, residues 197–217 (GGAFNPGIVWGPAIMGGNFDD) are extracellular. The NPG signature appears at 201 to 203 (NPG). A helical membrane pass occupies residues 218 to 238 (FVIYIISELSGGLLGAFIQVF). The Cytoplasmic portion of the chain corresponds to 239 to 242 (LLFK).

This sequence belongs to the MIP/aquaporin (TC 1.A.8) family.

The protein resides in the cell membrane. Water channel required to facilitate the transport of water across membranes. Involved in osmotolerance. This chain is Aquaporin (AQP), found in Enterocytozoon bieneusi (strain H348) (Microsporidian parasite).